The primary structure comprises 450 residues: MKTWPAPTAPTPVRATVTVPGSKSQTNRALVLAALAAAQGRGASTISGALRSRDTELMLDALQTLGLRVDGVGSELTVSGRIEPGPGARVDCGLAGTVLRFVPPLAALGSVPVTFDGDQQARGRPIAPLLDALRELGVAVDGTGLPFRVRGNGSLAGGTVAIDASASSQFVSGLLLSAASFTDGLTVQHTGSSLPSAPHIAMTAAMLRQAGVDIDDSTPNRWQVRPGPVAARRWDIEPDLTNAVAFLSAAVVSGGTVRITGWPRVSVQPADHILAILRQLNAVVIHADSSLEVRGPTGYDGFDVDLRAVGELTPSVAALAALASPGSVSRLSGIAHLRGHETDRLAALSTEINRLGGTCRETPDGLVITATPLRPGIWRAYADHRMAMAGAIIGLRVAGVEVDDIAATTKTLPEFPRLWAEMVGPGQGWGYPQPRSGQRARRATGQGSGG.

3-phosphoshikimate contacts are provided by Lys23, Ser24, and Arg28. Position 23 (Lys23) interacts with phosphoenolpyruvate. Phosphoenolpyruvate contacts are provided by Gly96 and Arg124. Ser167, Ser168, Gln169, Ser196, Glu311, and His340 together coordinate 3-phosphoshikimate. Gln169 is a binding site for phosphoenolpyruvate. Glu311 (proton acceptor) is an active-site residue. Residues Arg344, Arg385, and Lys410 each coordinate phosphoenolpyruvate. The disordered stretch occupies residues 426-450 (GQGWGYPQPRSGQRARRATGQGSGG).

The protein belongs to the EPSP synthase family. As to quaternary structure, monomer.

The protein localises to the cytoplasm. The enzyme catalyses 3-phosphoshikimate + phosphoenolpyruvate = 5-O-(1-carboxyvinyl)-3-phosphoshikimate + phosphate. The protein operates within metabolic intermediate biosynthesis; chorismate biosynthesis; chorismate from D-erythrose 4-phosphate and phosphoenolpyruvate: step 6/7. Functionally, catalyzes the transfer of the enolpyruvyl moiety of phosphoenolpyruvate (PEP) to the 5-hydroxyl of shikimate-3-phosphate (S3P) to produce enolpyruvyl shikimate-3-phosphate and inorganic phosphate. The protein is 3-phosphoshikimate 1-carboxyvinyltransferase of Mycobacterium tuberculosis (strain ATCC 25177 / H37Ra).